The sequence spans 487 residues: Lysine--tRNA ligase (487 aa).

The Mg(2+) site is built by E398 and E405.

It belongs to the class-II aminoacyl-tRNA synthetase family. Homodimer. Mg(2+) is required as a cofactor.

It is found in the cytoplasm. It catalyses the reaction tRNA(Lys) + L-lysine + ATP = L-lysyl-tRNA(Lys) + AMP + diphosphate. This chain is Lysine--tRNA ligase, found in Mycoplasma mobile (strain ATCC 43663 / 163K / NCTC 11711) (Mesomycoplasma mobile).